The sequence spans 785 residues: uncharacterized protein (785 aa).

Polar residues predominate over residues 53–65 (KNTLTGSHGSNDL). The disordered stretch occupies residues 53-162 (KNTLTGSHGS…RKAADEQGPI (110 aa)). Residues 66 to 79 (ATDESLDSPEDEEA) show a composition bias toward acidic residues. A compositionally biased stretch (polar residues) spans 81–94 (SPLQLGTPTSTTSG). Phosphoserine is present on serine 215. 2 disordered regions span residues 571–590 (KVVD…TSVN) and 631–657 (DSSG…RIQF). Over residues 575–584 (SDDEESDSDE) the composition is skewed to acidic residues. At serine 667 the chain carries Phosphoserine. Residues 693-785 (DPKMKFTSHP…FGSIFKKVFG (93 aa)) form a disordered region. Over residues 725–739 (RKAHHHHHHHNHVSR) the composition is skewed to basic residues. Residues 776–785 (FGSIFKKVFG) are compositionally biased toward low complexity.

This is an uncharacterized protein from Saccharomyces cerevisiae (strain ATCC 204508 / S288c) (Baker's yeast).